We begin with the raw amino-acid sequence, 360 residues long: Phospho-N-acetylmuramoyl-pentapeptide-transferase (360 aa).

10 consecutive transmembrane segments (helical) span residues 27–47 (GAMI…INSL), 71–91 (TPTM…LLWA), 93–113 (LASV…AIGF), 128–148 (FSGK…AFVI), 168–188 (FVVN…VGAG), 199–219 (GLAI…AYLS), 239–259 (LAVV…FNAP), 262–282 (AIFM…TVAV), 288–308 (IVLA…IIQV), and 337–357 (QVVI…LSTL).

Belongs to the glycosyltransferase 4 family. MraY subfamily. Mg(2+) is required as a cofactor.

It localises to the cell inner membrane. It carries out the reaction UDP-N-acetyl-alpha-D-muramoyl-L-alanyl-gamma-D-glutamyl-meso-2,6-diaminopimeloyl-D-alanyl-D-alanine + di-trans,octa-cis-undecaprenyl phosphate = di-trans,octa-cis-undecaprenyl diphospho-N-acetyl-alpha-D-muramoyl-L-alanyl-D-glutamyl-meso-2,6-diaminopimeloyl-D-alanyl-D-alanine + UMP. It participates in cell wall biogenesis; peptidoglycan biosynthesis. Functionally, catalyzes the initial step of the lipid cycle reactions in the biosynthesis of the cell wall peptidoglycan: transfers peptidoglycan precursor phospho-MurNAc-pentapeptide from UDP-MurNAc-pentapeptide onto the lipid carrier undecaprenyl phosphate, yielding undecaprenyl-pyrophosphoryl-MurNAc-pentapeptide, known as lipid I. The sequence is that of Phospho-N-acetylmuramoyl-pentapeptide-transferase from Brucella anthropi (strain ATCC 49188 / DSM 6882 / CCUG 24695 / JCM 21032 / LMG 3331 / NBRC 15819 / NCTC 12168 / Alc 37) (Ochrobactrum anthropi).